The following is a 275-amino-acid chain: Formamidopyrimidine-DNA glycosylase (275 aa).

Residue P2 is the Schiff-base intermediate with DNA of the active site. Residue E3 is the Proton donor of the active site. K58 acts as the Proton donor; for beta-elimination activity in catalysis. H91, R109, and K154 together coordinate DNA. An FPG-type zinc finger spans residues 240–274 (AVYERAGLACRVCGTPIRRLVQGQRATYFCPHCQK). Catalysis depends on R264, which acts as the Proton donor; for delta-elimination activity.

This sequence belongs to the FPG family. As to quaternary structure, monomer. The cofactor is Zn(2+).

The catalysed reaction is Hydrolysis of DNA containing ring-opened 7-methylguanine residues, releasing 2,6-diamino-4-hydroxy-5-(N-methyl)formamidopyrimidine.. It carries out the reaction 2'-deoxyribonucleotide-(2'-deoxyribose 5'-phosphate)-2'-deoxyribonucleotide-DNA = a 3'-end 2'-deoxyribonucleotide-(2,3-dehydro-2,3-deoxyribose 5'-phosphate)-DNA + a 5'-end 5'-phospho-2'-deoxyribonucleoside-DNA + H(+). Involved in base excision repair of DNA damaged by oxidation or by mutagenic agents. Acts as a DNA glycosylase that recognizes and removes damaged bases. Has a preference for oxidized purines, such as 7,8-dihydro-8-oxoguanine (8-oxoG). Has AP (apurinic/apyrimidinic) lyase activity and introduces nicks in the DNA strand. Cleaves the DNA backbone by beta-delta elimination to generate a single-strand break at the site of the removed base with both 3'- and 5'-phosphates. The protein is Formamidopyrimidine-DNA glycosylase of Bordetella avium (strain 197N).